The primary structure comprises 163 residues: ADP-ribosylation factor-like protein 2-binding protein (163 aa).

It belongs to the ARL2BP family. Interacts with GTP bound ARL2 and ARL3; the complex ARL2-ARL2BP as well as ARL2BP alone, binds to SLC25A4/ANT1. Interaction with ARL2 may be required for cilia basal body localization. Interacts with STAT3; interaction is enhanced with ARL2. Found in a complex with ARL2BP, ARL2 and SLC25A6. Found in a complex with ARL2, ARL2BP and SLC25A4. Interacts with STAT2, STAT3 and STAT4. In terms of tissue distribution, ubiquitous with higher expression in brain, especially in hippocampus and cortex. Also expressed in lung, cerebellum, liver, kidney, spleen and heart (at protein level).

The protein resides in the cytoplasm. The protein localises to the mitochondrion intermembrane space. It localises to the cytoskeleton. It is found in the microtubule organizing center. Its subcellular location is the centrosome. The protein resides in the nucleus. The protein localises to the spindle. It localises to the cilium basal body. Together with ARL2, plays a role in the nuclear translocation, retention and transcriptional activity of STAT3. May play a role as an effector of ARL2. The protein is ADP-ribosylation factor-like protein 2-binding protein (Arl2bp) of Rattus norvegicus (Rat).